Here is a 637-residue protein sequence, read N- to C-terminus: Probable potassium transport system protein Kup 2 (637 aa).

12 consecutive transmembrane segments (helical) span residues 18–38, 61–81, 107–127, 145–165, 174–194, 211–231, 255–275, 293–313, 345–365, 371–391, 402–422, and 429–449; these read FLVL…TSPL, LISL…VLFL, MPVL…DAMI, PAFS…LFAV, AVFF…GGLI, ALWF…AVFL, WFIL…ALVL, ALFP…QAVI, IYVP…IFSF, LATA…LMAF, AFTA…FLAA, and DGGW…WTWT.

It belongs to the HAK/KUP transporter (TC 2.A.72) family.

The protein resides in the cell inner membrane. It carries out the reaction K(+)(in) + H(+)(in) = K(+)(out) + H(+)(out). Transport of potassium into the cell. Likely operates as a K(+):H(+) symporter. This Agrobacterium fabrum (strain C58 / ATCC 33970) (Agrobacterium tumefaciens (strain C58)) protein is Probable potassium transport system protein Kup 2.